The primary structure comprises 110 residues: Ig lambda-1 chain V region S178 (110 aa).

In terms of domain architecture, Ig-like spans 1–106 (QAVVTQESAL…RWVFGGGTKL (106 aa)).

The protein is Ig lambda-1 chain V region S178 of Mus musculus (Mouse).